We begin with the raw amino-acid sequence, 59 residues long: Small ribosomal subunit protein bS21 (59 aa).

Residues 40–59 form a disordered region; the sequence is KPSIKKRAKSKAALKYKKQR.

It belongs to the bacterial ribosomal protein bS21 family.

In Protochlamydia amoebophila (strain UWE25), this protein is Small ribosomal subunit protein bS21.